The chain runs to 333 residues: 6-phosphogluconolactonase (333 aa).

This sequence belongs to the cycloisomerase 2 family.

The catalysed reaction is 6-phospho-D-glucono-1,5-lactone + H2O = 6-phospho-D-gluconate + H(+). Its pathway is carbohydrate degradation; pentose phosphate pathway; D-ribulose 5-phosphate from D-glucose 6-phosphate (oxidative stage): step 2/3. Catalyzes the hydrolysis of 6-phosphogluconolactone to 6-phosphogluconate. The chain is 6-phosphogluconolactonase from Cronobacter sakazakii (strain ATCC BAA-894) (Enterobacter sakazakii).